A 1378-amino-acid chain; its full sequence is DNA-directed RNA polymerase subunit beta (1378 aa).

The protein belongs to the RNA polymerase beta chain family. In terms of assembly, the RNAP catalytic core consists of 2 alpha, 1 beta, 1 beta' and 1 omega subunit. When a sigma factor is associated with the core the holoenzyme is formed, which can initiate transcription.

It carries out the reaction RNA(n) + a ribonucleoside 5'-triphosphate = RNA(n+1) + diphosphate. In terms of biological role, DNA-dependent RNA polymerase catalyzes the transcription of DNA into RNA using the four ribonucleoside triphosphates as substrates. This Hyphomonas neptunium (strain ATCC 15444) protein is DNA-directed RNA polymerase subunit beta.